The primary structure comprises 444 residues: Aspartate--tRNA(Asp/Asn) ligase (444 aa).

Glu176 contacts L-aspartate. The segment at Gln198–Lys201 is aspartate. Position 220 (Arg220) interacts with L-aspartate. Residues Arg220–Glu222, Arg228–Leu230, and Glu367 contribute to the ATP site. Mg(2+)-binding residues include Glu367 and Ser370. L-aspartate is bound by residues Ser370 and Arg374. Gly415–Arg418 lines the ATP pocket.

The protein belongs to the class-II aminoacyl-tRNA synthetase family. Type 2 subfamily. As to quaternary structure, homodimer. Mg(2+) is required as a cofactor.

Its subcellular location is the cytoplasm. The enzyme catalyses tRNA(Asx) + L-aspartate + ATP = L-aspartyl-tRNA(Asx) + AMP + diphosphate. Its function is as follows. Aspartyl-tRNA synthetase with relaxed tRNA specificity since it is able to aspartylate not only its cognate tRNA(Asp) but also tRNA(Asn). Reaction proceeds in two steps: L-aspartate is first activated by ATP to form Asp-AMP and then transferred to the acceptor end of tRNA(Asp/Asn). The sequence is that of Aspartate--tRNA(Asp/Asn) ligase from Methanosarcina barkeri (strain Fusaro / DSM 804).